A 641-amino-acid polypeptide reads, in one-letter code: Anthrax toxin receptor-like (641 aa).

Residues 1–27 form the signal peptide; that stretch reads MMSHSPSMPCSALFLLLLLLLPPTFKG. The Extracellular segment spans residues 28 to 363; that stretch reads GSLRYHGPGW…ASQGIVFKRT (336 aa). The VWFA domain occupies 76–247; it reads DLYLVLDKSG…SALEGVVDPL (172 aa). A divalent metal cation is bound by residues serine 84, serine 86, and threonine 150. The helical transmembrane segment at 364–384 threads the bilayer; that stretch reads WLMFLPVLLVTLLLLCCTWKL. Over 385–641 the chain is Cytoplasmic; the sequence is CIKPKKLPPP…FPPISKGPKF (257 aa). A disordered region spans residues 391 to 455; the sequence is LPPPPPKPEK…ARPPPAPLPA (65 aa). A compositionally biased stretch (pro residues) spans 407–436; the sequence is PPPSSPPAPGRGPGPGPSAGPGPGPGPSPG.

This sequence belongs to the ATR family.

The protein resides in the membrane. The protein is Anthrax toxin receptor-like (Antxrl) of Mus musculus (Mouse).